The primary structure comprises 108 residues: MNERDDILQAVYEVILDRKGALPESSYTASLFHKGIDKILKKVGEEATEVIIAGKGGKREEIVYETADLLFHTLVLLGHYDIAPADVYNELRRRFGTSGHAEKASRNE.

The protein belongs to the PRA-PH family.

The protein localises to the cytoplasm. It catalyses the reaction 1-(5-phospho-beta-D-ribosyl)-ATP + H2O = 1-(5-phospho-beta-D-ribosyl)-5'-AMP + diphosphate + H(+). It participates in amino-acid biosynthesis; L-histidine biosynthesis; L-histidine from 5-phospho-alpha-D-ribose 1-diphosphate: step 2/9. The sequence is that of Phosphoribosyl-ATP pyrophosphatase from Geobacter sulfurreducens (strain ATCC 51573 / DSM 12127 / PCA).